Here is a 155-residue protein sequence, read N- to C-terminus: SsrA-binding protein (155 aa).

The tract at residues 136–155 (RESLKRRQDQRDMQRAMKNY) is disordered.

It belongs to the SmpB family.

The protein localises to the cytoplasm. Required for rescue of stalled ribosomes mediated by trans-translation. Binds to transfer-messenger RNA (tmRNA), required for stable association of tmRNA with ribosomes. tmRNA and SmpB together mimic tRNA shape, replacing the anticodon stem-loop with SmpB. tmRNA is encoded by the ssrA gene; the 2 termini fold to resemble tRNA(Ala) and it encodes a 'tag peptide', a short internal open reading frame. During trans-translation Ala-aminoacylated tmRNA acts like a tRNA, entering the A-site of stalled ribosomes, displacing the stalled mRNA. The ribosome then switches to translate the ORF on the tmRNA; the nascent peptide is terminated with the 'tag peptide' encoded by the tmRNA and targeted for degradation. The ribosome is freed to recommence translation, which seems to be the essential function of trans-translation. The polypeptide is SsrA-binding protein (Nostoc sp. (strain PCC 7120 / SAG 25.82 / UTEX 2576)).